Reading from the N-terminus, the 380-residue chain is 1-deoxy-D-xylulose 5-phosphate reductoisomerase (380 aa).

NADPH is bound by residues Thr-10, Gly-11, Ser-12, Ile-13, Gly-36, Arg-37, Asn-38, and Asn-120. Lys-121 contributes to the 1-deoxy-D-xylulose 5-phosphate binding site. Glu-122 provides a ligand contact to NADPH. Asp-146 is a Mn(2+) binding site. 1-deoxy-D-xylulose 5-phosphate contacts are provided by Ser-147, Glu-148, Ser-172, and His-195. Glu-148 provides a ligand contact to Mn(2+). Position 201 (Gly-201) interacts with NADPH. 4 residues coordinate 1-deoxy-D-xylulose 5-phosphate: Ser-208, Asn-213, Lys-214, and Glu-217. Residue Glu-217 coordinates Mn(2+).

The protein belongs to the DXR family. Requires Mg(2+) as cofactor. The cofactor is Mn(2+).

The enzyme catalyses 2-C-methyl-D-erythritol 4-phosphate + NADP(+) = 1-deoxy-D-xylulose 5-phosphate + NADPH + H(+). It functions in the pathway isoprenoid biosynthesis; isopentenyl diphosphate biosynthesis via DXP pathway; isopentenyl diphosphate from 1-deoxy-D-xylulose 5-phosphate: step 1/6. Its function is as follows. Catalyzes the NADPH-dependent rearrangement and reduction of 1-deoxy-D-xylulose-5-phosphate (DXP) to 2-C-methyl-D-erythritol 4-phosphate (MEP). The protein is 1-deoxy-D-xylulose 5-phosphate reductoisomerase of Listeria monocytogenes serovar 1/2a (strain ATCC BAA-679 / EGD-e).